The chain runs to 98 residues: Putative septation protein SpoVG (98 aa).

Belongs to the SpoVG family.

Functionally, essential for sporulation. Interferes with or is a negative regulator of the pathway leading to asymmetric septation. The polypeptide is Putative septation protein SpoVG (Shouchella clausii (strain KSM-K16) (Alkalihalobacillus clausii)).